The sequence spans 246 residues: MTSQLSEDNSESPNLNSDELECKICYNRYNLRQRKPKVLGCCHRVCAKCLYKLVDCGESPQCVIVCPFCRFETRMPEDEVSSLPDDNNILLNLACGGRGKCVGDNPTELLLTPKRLSTIVTPSHTSTNCLVITIMEVQRESSPALNTTPMVEFYRPSNYDPVSIPQNWTVWNCTSLICKTSVRVFVWLLGLLYFSSLPLGIYLLVSKKVTLGVVFVSLVPSSLVILMIYGFCQCMCHEFLDCMSTP.

The RING-type zinc-finger motif lies at 22 to 70 (CKICYNRYNLRQRKPKVLGCCHRVCAKCLYKLVDCGESPQCVIVCPFCR). The next 2 helical transmembrane spans lie at 184 to 204 (VFVW…IYLL) and 211 to 231 (LGVV…IYGF).

In terms of assembly, interacts with ATP6V0C.

The protein localises to the membrane. Its subcellular location is the cytoplasm. It catalyses the reaction S-ubiquitinyl-[E2 ubiquitin-conjugating enzyme]-L-cysteine + [acceptor protein]-L-lysine = [E2 ubiquitin-conjugating enzyme]-L-cysteine + N(6)-ubiquitinyl-[acceptor protein]-L-lysine.. Its pathway is protein modification; protein ubiquitination. E3 ubiquitin-protein ligase that mediates the ubiquitination of atp6v0c and targets it to degradation via the ubiquitin-proteasome pathway. This chain is E3 ubiquitin-protein ligase RNF182 (rnf182), found in Xenopus laevis (African clawed frog).